Reading from the N-terminus, the 172-residue chain is Cytochrome b6-f complex iron-sulfur subunit (172 aa).

The chain crosses the membrane as a helical span at residues 19–39; sequence LNALLSGSVGVVVVGALYPVV. The region spanning 61-161 is the Rieske domain; it reads GKPISVSELL…ATVDGDNVRF (101 aa). [2Fe-2S] cluster-binding residues include cysteine 107, histidine 109, cysteine 125, and histidine 128. Cysteine 112 and cysteine 127 form a disulfide bridge.

Belongs to the Rieske iron-sulfur protein family. The 4 large subunits of the cytochrome b6-f complex are cytochrome b6, subunit IV (17 kDa polypeptide, PetD), cytochrome f and the Rieske protein, while the 4 small subunits are PetG, PetL, PetM and PetN. The complex functions as a dimer. [2Fe-2S] cluster serves as cofactor.

The protein localises to the cellular thylakoid membrane. The enzyme catalyses 2 oxidized [plastocyanin] + a plastoquinol + 2 H(+)(in) = 2 reduced [plastocyanin] + a plastoquinone + 4 H(+)(out). In terms of biological role, component of the cytochrome b6-f complex, which mediates electron transfer between photosystem II (PSII) and photosystem I (PSI), cyclic electron flow around PSI, and state transitions. This Synechococcus sp. (strain JA-2-3B'a(2-13)) (Cyanobacteria bacterium Yellowstone B-Prime) protein is Cytochrome b6-f complex iron-sulfur subunit.